Here is a 299-residue protein sequence, read N- to C-terminus: GTP cyclohydrolase FolE2 (299 aa).

Belongs to the GTP cyclohydrolase IV family.

It catalyses the reaction GTP + H2O = 7,8-dihydroneopterin 3'-triphosphate + formate + H(+). It participates in cofactor biosynthesis; 7,8-dihydroneopterin triphosphate biosynthesis; 7,8-dihydroneopterin triphosphate from GTP: step 1/1. In terms of biological role, converts GTP to 7,8-dihydroneopterin triphosphate. This Klebsiella pneumoniae protein is GTP cyclohydrolase FolE2.